A 714-amino-acid chain; its full sequence is Protein BLISTER (714 aa).

Disordered stretches follow at residues M1 to S113, S219 to R261, V288 to Y325, and M519 to T576. Positions R8–K33 are enriched in basic and acidic residues. Composition is skewed to polar residues over residues S36–I50 and S58–E74. Basic and acidic residues predominate over residues D92–D102. Composition is skewed to polar residues over residues S219 to S253, V288 to G297, N313 to A322, and M519 to Q561. A coiled-coil region spans residues N356–S525. Residues E562–T576 show a composition bias toward low complexity.

As to quaternary structure, interacts with CLF. Expressed in root tips, emerging lateral roots, shoot apical meristem (SAM), vasculature of cotyledons, leaves, sepals and carpels.

It is found in the nucleus. Its subcellular location is the cytoplasm. Functionally, is required for normal leaf, flower and seed development and controls cotyledon and leaf patterning by inhibiting premature differentiation. Regulates the expression of a subset of PcG target genes. Is required for the repression of the floral specific genes PI, SEP2, and SEP3, but also for the activation of FLC. Involved in response to cold. Involved in the regulation of COR15A, COR15B, BAM3 and AMY3 transcripts, and ascorbate levels in response to prolonged chilling temperatures. The sequence is that of Protein BLISTER from Arabidopsis thaliana (Mouse-ear cress).